Consider the following 82-residue polypeptide: Cytochrome b-c1 complex subunit 8 (82 aa).

Topologically, residues 1–39 (MGREFGNLTRIRHVISYSLSPFEQRAFPHYFSKGIPNVL) are mitochondrial matrix. Residue serine 16 is modified to Phosphoserine. At lysine 33 the chain carries N6-acetyllysine; alternate. Lysine 33 carries the post-translational modification N6-succinyllysine; alternate. A helical transmembrane segment spans residues 40–68 (RRTRERILRVAPPFVLFYLIYTWGNQEFA). Residues 69–82 (QSKRKNPAKYENDK) lie on the Mitochondrial intermembrane side of the membrane.

Belongs to the UQCRQ/QCR8 family. As to quaternary structure, component of the ubiquinol-cytochrome c oxidoreductase (cytochrome b-c1 complex, complex III, CIII), a multisubunit enzyme composed of 11 subunits. The complex is composed of 3 respiratory subunits cytochrome b, cytochrome c1 and Rieske protein UQCRFS1, 2 core protein subunits UQCRC1/QCR1 and UQCRC2/QCR2, and 6 low-molecular weight protein subunits UQCRH/QCR6, UQCRB/QCR7, UQCRQ/QCR8, UQCR10/QCR9, UQCR11/QCR10 and subunit 9, the cleavage product of Rieske protein UQCRFS1. The complex exists as an obligatory dimer and forms supercomplexes (SCs) in the inner mitochondrial membrane with NADH-ubiquinone oxidoreductase (complex I, CI) and cytochrome c oxidase (complex IV, CIV), resulting in different assemblies (supercomplex SCI(1)III(2)IV(1) and megacomplex MCI(2)III(2)IV(2)). Interacts with UQCC6.

It is found in the mitochondrion inner membrane. Its function is as follows. Component of the ubiquinol-cytochrome c oxidoreductase, a multisubunit transmembrane complex that is part of the mitochondrial electron transport chain which drives oxidative phosphorylation. The respiratory chain contains 3 multisubunit complexes succinate dehydrogenase (complex II, CII), ubiquinol-cytochrome c oxidoreductase (cytochrome b-c1 complex, complex III, CIII) and cytochrome c oxidase (complex IV, CIV), that cooperate to transfer electrons derived from NADH and succinate to molecular oxygen, creating an electrochemical gradient over the inner membrane that drives transmembrane transport and the ATP synthase. The cytochrome b-c1 complex catalyzes electron transfer from ubiquinol to cytochrome c, linking this redox reaction to translocation of protons across the mitochondrial inner membrane, with protons being carried across the membrane as hydrogens on the quinol. In the process called Q cycle, 2 protons are consumed from the matrix, 4 protons are released into the intermembrane space and 2 electrons are passed to cytochrome c. In Rattus norvegicus (Rat), this protein is Cytochrome b-c1 complex subunit 8 (Uqcrq).